The primary structure comprises 267 residues: Regulatory protein VirG (267 aa).

The 115-residue stretch at 29–143 folds into the Response regulatory domain; sequence HVLLVDDDVA…EFLARIRVAL (115 aa). At Asp78 the chain carries 4-aspartylphosphate. The segment at residues 155–255 is a DNA-binding region (ompR/PhoB-type); it reads RRSFCFTDWT…ARGAGYFFDA (101 aa).

Post-translationally, phosphorylated by wide host range (WHR) VirA protein.

The protein resides in the cytoplasm. In terms of biological role, virG is required for the positive regulation of at least two vir loci encoded by the Ti plasmid of A.tumefaciens. The polypeptide is Regulatory protein VirG (virG) (Rhizobium radiobacter (Agrobacterium tumefaciens)).